The sequence spans 311 residues: Aspartate carbamoyltransferase catalytic subunit (311 aa).

Carbamoyl phosphate contacts are provided by Arg-52 and Thr-53. Lys-80 is an L-aspartate binding site. Carbamoyl phosphate contacts are provided by Arg-102, His-131, and Gln-134. Residues Arg-164 and Arg-216 each coordinate L-aspartate. Carbamoyl phosphate is bound by residues Ala-259 and Pro-260.

It belongs to the aspartate/ornithine carbamoyltransferase superfamily. ATCase family. As to quaternary structure, heterododecamer (2C3:3R2) of six catalytic PyrB chains organized as two trimers (C3), and six regulatory PyrI chains organized as three dimers (R2).

The enzyme catalyses carbamoyl phosphate + L-aspartate = N-carbamoyl-L-aspartate + phosphate + H(+). The protein operates within pyrimidine metabolism; UMP biosynthesis via de novo pathway; (S)-dihydroorotate from bicarbonate: step 2/3. In terms of biological role, catalyzes the condensation of carbamoyl phosphate and aspartate to form carbamoyl aspartate and inorganic phosphate, the committed step in the de novo pyrimidine nucleotide biosynthesis pathway. The polypeptide is Aspartate carbamoyltransferase catalytic subunit (Lactiplantibacillus plantarum (strain ATCC BAA-793 / NCIMB 8826 / WCFS1) (Lactobacillus plantarum)).